The primary structure comprises 325 residues: MATIRELRDRIRSVNSTKKITKAQELIATSRITKAQGRVAAAAPYAEEIQRVLERLASASSLDHPMLREREGGKRAAVLVVTSDRGMAGGYNHNVLKKAAELEKLLAESGYEVVRYVTGKKGVDYYKFRAEDVAGAWTGFSQDPDWAATHNVRRHLIDGFTASSEGEAAWREGLNLSEGQDIQGFDQVHVVYTEFISMLTQNPVVHQLLPVEPVIEDEIFEKGEDLLSSSGDVEPDYEFEPDADTLLEALLPQYVSRRLFSIFLEAAAAESASRRNAMKSATDNASELVKDLSRVANQARQAQITQEITEIVGGAGALADSGESD.

The protein belongs to the ATPase gamma chain family. As to quaternary structure, F-type ATPases have 2 components, CF(1) - the catalytic core - and CF(0) - the membrane proton channel. CF(1) has five subunits: alpha(3), beta(3), gamma(1), delta(1), epsilon(1). CF(0) has three main subunits: a, b and c.

The protein resides in the cell membrane. Functionally, produces ATP from ADP in the presence of a proton gradient across the membrane. The gamma chain is believed to be important in regulating ATPase activity and the flow of protons through the CF(0) complex. This Corynebacterium glutamicum (strain R) protein is ATP synthase gamma chain.